Reading from the N-terminus, the 184-residue chain is uncharacterized protein (184 aa).

Residues 130-149 (DKDDDKKKKKKDDKKDDPCN) are disordered.

It localises to the virion. This is an uncharacterized protein from Acanthamoeba polyphaga (Amoeba).